The sequence spans 369 residues: CCA-adding enzyme (369 aa).

Positions 8 and 11 each coordinate ATP. CTP is bound by residues Gly8 and Arg11. Mg(2+) is bound by residues Asp21 and Asp23. ATP is bound by residues Arg91, Arg137, and Arg140. CTP is bound by residues Arg91, Arg137, and Arg140.

It belongs to the tRNA nucleotidyltransferase/poly(A) polymerase family. Bacterial CCA-adding enzyme type 2 subfamily. Mg(2+) is required as a cofactor.

The catalysed reaction is a tRNA precursor + 2 CTP + ATP = a tRNA with a 3' CCA end + 3 diphosphate. It catalyses the reaction a tRNA with a 3' CCA end + 2 CTP + ATP = a tRNA with a 3' CCACCA end + 3 diphosphate. In terms of biological role, catalyzes the addition and repair of the essential 3'-terminal CCA sequence in tRNAs without using a nucleic acid template. Adds these three nucleotides in the order of C, C, and A to the tRNA nucleotide-73, using CTP and ATP as substrates and producing inorganic pyrophosphate. tRNA 3'-terminal CCA addition is required both for tRNA processing and repair. Also involved in tRNA surveillance by mediating tandem CCA addition to generate a CCACCA at the 3' terminus of unstable tRNAs. While stable tRNAs receive only 3'-terminal CCA, unstable tRNAs are marked with CCACCA and rapidly degraded. The chain is CCA-adding enzyme from Francisella tularensis subsp. novicida (strain U112).